The chain runs to 875 residues: Neurotrypsin (875 aa).

Positions 1–20 are cleaved as a signal peptide; it reads MTLARFVLALVLGALPEVVG. A glycan (N-linked (GlcNAc...) asparagine) is linked at asparagine 26. Positions 30-87 are disordered; that stretch reads HHRHRHSPPPGPQYPYYLPTHQRPPRTRPPPPLPRFPRPPRALPAQRPHALQAGHTPR. The segment covering 56-71 has biased composition (pro residues); sequence TRPPPPLPRFPRPPRA. The 73-residue stretch at 93–165 folds into the Kringle domain; sequence CPAGELWVSV…GKVDWGYCDC (73 aa). 20 disulfides stabilise this stretch: cysteine 93–cysteine 165, cysteine 109–cysteine 149, cysteine 138–cysteine 163, cysteine 195–cysteine 259, cysteine 208–cysteine 269, cysteine 239–cysteine 249, cysteine 305–cysteine 369, cysteine 318–cysteine 379, cysteine 349–cysteine 359, cysteine 412–cysteine 475, cysteine 425–cysteine 485, cysteine 455–cysteine 465, cysteine 525–cysteine 589, cysteine 538–cysteine 599, cysteine 569–cysteine 579, cysteine 619–cysteine 750, cysteine 661–cysteine 677, cysteine 765–cysteine 831, cysteine 794–cysteine 808, and cysteine 821–cysteine 850. SRCR domains lie at 170-271, 280-381, 387-487, and 500-601; these read VRLR…TCSF, IRLV…SCTP, IRLA…ACYP, and VRLM…ICDY. The tract at residues 619–630 is zymogen activation region; the sequence is CGLRLLHRRQKR. Positions 631–874 constitute a Peptidase S1 domain; it reads IIGGKNSLRG…FVPWIKSVTK (244 aa). Residue histidine 676 is the Charge relay system of the active site. Residue asparagine 683 is glycosylated (N-linked (GlcNAc...) asparagine). The active-site Charge relay system is aspartate 726. The active-site Charge relay system is serine 825.

It belongs to the peptidase S1 family.

It is found in the secreted. Its function is as follows. Plays a role in neuronal plasticity and the proteolytic action may subserve structural reorganizations associated with learning and memory operations. The chain is Neurotrypsin (PRSS12) from Macaca mulatta (Rhesus macaque).